A 480-amino-acid polypeptide reads, in one-letter code: Histone-lysine N-methyltransferase ASHR1 (480 aa).

The SET domain occupies 11 to 248; the sequence is RCLGVSNLPQ…KDSEITISYI (238 aa). The Zn(2+) site is built by C56, C59, C68, C71, C77, C81, H89, and C93. The segment at 56 to 93 adopts an MYND-type zinc-finger fold; it reads CDGCFKTNNLKKCSACQVVWYCGSSCQKSEWKLHRDEC.

The protein belongs to the class V-like SAM-binding methyltransferase superfamily. Histone-lysine methyltransferase family. SET2 subfamily.

It is found in the nucleus. The protein resides in the chromosome. The catalysed reaction is L-lysyl-[histone] + S-adenosyl-L-methionine = N(6)-methyl-L-lysyl-[histone] + S-adenosyl-L-homocysteine + H(+). In terms of biological role, histone methyltransferase. The sequence is that of Histone-lysine N-methyltransferase ASHR1 (ASHR1) from Arabidopsis thaliana (Mouse-ear cress).